Reading from the N-terminus, the 432-residue chain is Tyrosine--tRNA ligase (432 aa).

Position 35 (Tyr35) interacts with L-tyrosine. The short motif at 40–49 is the 'HIGH' region element; sequence PTAGSLHVGH. Residues Tyr175 and Gln179 each contribute to the L-tyrosine site. The 'KMSKS' region motif lies at 239–243; it reads KFGKT. Lys242 provides a ligand contact to ATP. The 58-residue stretch at 365–422 folds into the S4 RNA-binding domain; it reads PPLVDLFASTGLVPSKSAARRTIQEGGAYLNNAKVTDIEARVSEADLLHGRYLVLRRG.

This sequence belongs to the class-I aminoacyl-tRNA synthetase family. TyrS type 1 subfamily. As to quaternary structure, homodimer.

The protein localises to the cytoplasm. It carries out the reaction tRNA(Tyr) + L-tyrosine + ATP = L-tyrosyl-tRNA(Tyr) + AMP + diphosphate + H(+). Functionally, catalyzes the attachment of tyrosine to tRNA(Tyr) in a two-step reaction: tyrosine is first activated by ATP to form Tyr-AMP and then transferred to the acceptor end of tRNA(Tyr). The sequence is that of Tyrosine--tRNA ligase from Thermobifida fusca (strain YX).